A 177-amino-acid polypeptide reads, in one-letter code: Protein OPG036 (177 aa).

Belongs to the poxviridae OPG036 family.

It localises to the host nucleus. Its function is as follows. Plays a role in the inhibition of host innate immune response. Within the host nucleus, inhibits activation of interferon-beta promoter by inhibiting IRF3 activation. The polypeptide is Protein OPG036 (OPG036) (Homo sapiens (Human)).